A 397-amino-acid polypeptide reads, in one-letter code: Monooxygenase 1 (397 aa).

This sequence belongs to the 3-hydroxybenzoate 6-hydroxylase family. In terms of assembly, monomer. It depends on FAD as a cofactor. As to expression, expressed in seedlings, roots, leaves, flowers and siliques.

This chain is Monooxygenase 1, found in Arabidopsis thaliana (Mouse-ear cress).